The primary structure comprises 519 residues: Voltage-gated potassium channel regulatory subunit KCNG4 (519 aa).

A disordered region spans residues 1–25; it reads MPMPSRDGGLHPRHHHYGSHSPWSQ. Over 1-218 the chain is Cytoplasmic; sequence MPMPSRDGGL…EMVENPQSGL (218 aa). The chain crosses the membrane as a helical span at residues 219 to 240; it reads PGKVFACLSILFVATTAVSLCV. Residues 241–261 are Extracellular-facing; it reads STMPDLRAEEDQGECSRKCYY. The helical transmembrane segment at 262 to 283 threads the bilayer; sequence IFIVETICVAWFSLEFCLRFVQ. The Cytoplasmic portion of the chain corresponds to 284–294; it reads AQDKCQFFQGP. The chain crosses the membrane as a helical span at residues 295–314; sequence LNIIDILAISPYYVSLAVSE. Over 315–328 the chain is Extracellular; it reads EPPEDGERPSGSSY. Residues 329–353 form a helical; Voltage-sensor membrane-spanning segment; it reads LEKVGLVLRVLRALRILYVMRLARH. The Cytoplasmic portion of the chain corresponds to 354 to 368; that stretch reads SLGLQTLGLTVRRCT. A helical transmembrane segment spans residues 369-390; sequence REFGLLLLFLAVAITLFSPLVY. Residues 391–405 lie on the Extracellular side of the membrane; that stretch reads VAEKESGRVLEFTSI. An intramembrane region (helical) is located at residues 406 to 417; it reads PASYWWAIISMT. The Selectivity filter signature appears at 418–423; it reads TVGYGD. The stretch at 418-425 is an intramembrane region; the sequence is TVGYGDMV. Residues 426–432 lie on the Extracellular side of the membrane; it reads PRSVPGQ. The chain crosses the membrane as a helical span at residues 433 to 461; the sequence is MVALSSILSGILIMAFPATSIFHTFSHSY. Over 462–519 the chain is Cytoplasmic; the sequence is LELKKEQEQLQARLRHLQNTGPASECELLDPHVASEHELMNDVNDLILEGPALPIMHM.

This sequence belongs to the potassium channel family. G (TC 1.A.1.2) subfamily. Kv6.4/KCNG4 sub-subfamily. In terms of assembly, heterotetramer with KCNB1. Does not form homomultimer. Highly expressed in brain, and at lower levels in liver, small intestine and colon.

It localises to the cell membrane. In terms of biological role, regulatory subunit of the voltage-gated potassium (Kv) channel which, when coassembled with KCNB1, modulates the kinetics parameters of the heterotetrameric channel namely the time course of activation, deactivation and inactivation and on the voltage-dependence of activation. Potassium channel subunit that does not form functional channels by itself. Reduces the deactivation rate. Modulates the threshold for activation by shifting by approximately 20 mV in hyperpolarizing direction. Markedly changes the inactivation by shifting the voltage dependence of inactivation by approximately 40 mV in hyperpolarizing direction. Acceleratee activation and enhances the time course of activation. The polypeptide is Voltage-gated potassium channel regulatory subunit KCNG4 (Homo sapiens (Human)).